A 199-amino-acid chain; its full sequence is Ribonuclease HII (199 aa).

Residues 1–199 (MCVCGIDEAG…TYKNLVQGHI (199 aa)) enclose the RNase H type-2 domain. A divalent metal cation contacts are provided by aspartate 7, glutamate 8, and aspartate 97.

It belongs to the RNase HII family. Requires Mn(2+) as cofactor. It depends on Mg(2+) as a cofactor.

It localises to the cytoplasm. The enzyme catalyses Endonucleolytic cleavage to 5'-phosphomonoester.. Its function is as follows. Endonuclease that specifically degrades the RNA of RNA-DNA hybrids. This Picrophilus torridus (strain ATCC 700027 / DSM 9790 / JCM 10055 / NBRC 100828 / KAW 2/3) protein is Ribonuclease HII.